Consider the following 55-residue polypeptide: Large ribosomal subunit protein bL33 (55 aa).

This sequence belongs to the bacterial ribosomal protein bL33 family.

In Phenylobacterium zucineum (strain HLK1), this protein is Large ribosomal subunit protein bL33.